An 857-amino-acid polypeptide reads, in one-letter code: Phosphoenolpyruvate carboxylase (857 aa).

Catalysis depends on residues His144 and Lys530.

The protein belongs to the PEPCase type 1 family. In terms of assembly, homotetramer. It depends on Mg(2+) as a cofactor. The N-terminus is blocked.

It carries out the reaction oxaloacetate + phosphate = phosphoenolpyruvate + hydrogencarbonate. In terms of biological role, forms oxaloacetate, a four-carbon dicarboxylic acid source for the tricarboxylic acid cycle. This chain is Phosphoenolpyruvate carboxylase (ppc), found in Thermus sp. (strain 71).